The sequence spans 444 residues: Homogentisate 1,2-dioxygenase (444 aa).

His298 acts as the Proton acceptor in catalysis. Positions 341 and 347 each coordinate Fe cation. Homogentisate is bound by residues Tyr356 and His377. His377 contacts Fe cation.

Belongs to the homogentisate dioxygenase family. Hexamer; dimer of trimers. Requires Fe cation as cofactor.

It carries out the reaction homogentisate + O2 = 4-maleylacetoacetate + H(+). Its pathway is amino-acid degradation; L-phenylalanine degradation; acetoacetate and fumarate from L-phenylalanine: step 4/6. Its function is as follows. Involved in the catabolism of homogentisate (2,5-dihydroxyphenylacetate or 2,5-OH-PhAc), a central intermediate in the degradation of phenylalanine and tyrosine. Catalyzes the oxidative ring cleavage of the aromatic ring of homogentisate to yield maleylacetoacetate. The chain is Homogentisate 1,2-dioxygenase from Burkholderia ambifaria (strain ATCC BAA-244 / DSM 16087 / CCUG 44356 / LMG 19182 / AMMD) (Burkholderia cepacia (strain AMMD)).